Consider the following 298-residue polypeptide: Mitochondrial glycine transporter (298 aa).

Solcar repeat units lie at residues 5-84 (TKTR…MRTA), 105-189 (LTTY…AKEV), and 211-295 (TSTL…LIKL). Transmembrane regions (helical) follow at residues 11–36 (LIGG…TRIQ), 59–85 (GTLP…RTAI), 111–136 (LISG…VRYE), 164–187 (GFGP…EKAK), 215–241 (VNST…KTRM), and 270–288 (GLSM…AWGI).

It belongs to the mitochondrial carrier (TC 2.A.29) family. SLC25A38 subfamily.

The protein localises to the mitochondrion inner membrane. The catalysed reaction is glycine(in) = glycine(out). Its function is as follows. Mitochondrial glycine transporter that imports glycine into the mitochondrial matrix. Plays an important role in providing glycine for the first enzymatic step in heme biosynthesis, the condensation of glycine with succinyl-CoA to produce 5-aminolevulinate (ALA) in the mitochondrial matrix. The protein is Mitochondrial glycine transporter of Vanderwaltozyma polyspora (strain ATCC 22028 / DSM 70294 / BCRC 21397 / CBS 2163 / NBRC 10782 / NRRL Y-8283 / UCD 57-17) (Kluyveromyces polysporus).